Here is a 341-residue protein sequence, read N- to C-terminus: Cell division protein FtsX (341 aa).

Residues 1-34 form a disordered region; sequence MSTTRTPKVSERVAPKPADPQPAKKKRGEDDDGP. Residues 1 to 65 lie on the Cytoplasmic side of the membrane; sequence MSTTRTPKVS…RRLGKQPIGS (65 aa). The chain crosses the membrane as a helical span at residues 66–86; that stretch reads FFTCLVMAVALSMPMGLSLLL. Residues 87 to 212 lie on the Periplasmic side of the membrane; it reads KNIEQLGGSW…LAAILKLGDR (126 aa). A helical transmembrane segment spans residues 213 to 233; the sequence is FVFGLAVMLISALLLVIGNTI. Residues 234-263 lie on the Cytoplasmic side of the membrane; the sequence is RLHIENRRIEIEVIKLVGGTDAYVRRPFLY. A helical membrane pass occupies residues 264–284; sequence MGALYGLGAGLLAWGILAFGL. The Periplasmic segment spans residues 285–311; sequence NWLNEAVVGLSGLYGSDFALGGVPASD. Residues 312–332 traverse the membrane as a helical segment; sequence GLSLLIGAVLLGYIGAWIAVA. The Cytoplasmic portion of the chain corresponds to 333–341; the sequence is RHLNELAPR.

This sequence belongs to the ABC-4 integral membrane protein family. FtsX subfamily. As to quaternary structure, forms a membrane-associated complex with FtsE.

It is found in the cell inner membrane. Its function is as follows. Part of the ABC transporter FtsEX involved in cellular division. This is Cell division protein FtsX from Pseudomonas putida (Arthrobacter siderocapsulatus).